We begin with the raw amino-acid sequence, 24 residues long: Coenzyme PQQ synthesis protein A (24 aa).

Residues 16–20 (EVTMY) constitute a cross-link (pyrroloquinoline quinone (Glu-Tyr)).

The protein belongs to the PqqA family.

Its pathway is cofactor biosynthesis; pyrroloquinoline quinone biosynthesis. Its function is as follows. Required for coenzyme pyrroloquinoline quinone (PQQ) biosynthesis. PQQ is probably formed by cross-linking a specific glutamate to a specific tyrosine residue and excising these residues from the peptide. This Pseudomonas fluorescens (strain Pf0-1) protein is Coenzyme PQQ synthesis protein A.